The sequence spans 1198 residues: MAAAIGVRGRFELLPRSGPGWLLSLSALLSVVARGALATTHWVVTEDGKIQQQVDSPMNLKHPHDLVILMRQETTVNYLKELEKQLVAQKIHIEENEDRDTGLEQRHNKEDPDCIKAKVPLGDLDLYDGTYITLESKDIRPEDFIDTESPVPPDPEQPDCTKILELPYSIHAFQHLRGVQERVNLSAPLLPKEDPIFTYLSKRLGRSIDDIGHLIHEGLQKNASSWVLYNLASFYWRIKNEPYQVVECAMRALHFSSRHNKDIALVNLANVLHRAHFSADAAVVVHAALDDSDFFTSYYTLGNIYAMLGEYNHSVLCYDHALQAKPGFEQAIKRKHAVLCQQKLEQKLEAQHRSLQRTLNELKEYQKQHDHYLRQQEILEKHKLIQEEQILRNIIHETQMAKEAQLGNHQICRLVNQQHSLHCQWDQPVRYHRGDIFENVDYVQFGDDSSTSSMMSVNFDVPTNQSDVSESVRSSPVAHSVLWVWGRDSDAYRDKQHILWPKRADCTDSYPRVPLGGELPTYFLPPENKGLRIHELTSDDYSSEEEAQPPDCSITDYRKSHTLSYLVKELEVRMDLKAKIPDDHARKILLSRIKNYTVPEEEIGSFLFHAINKPNAPVWLILNEAGLYWRAVGNSTFAIACLQRALNLAPVQYQDIPLVNLANLLIHYGLHLDATKLLLQAVAVNSSEPLTFLSLGNAYLALKNVSGALEAFRQALKLSTKCPECESSLKLIRCMQFYPFLYNATSSVCGGHCHEKPLDNSHDKQKYFAKPQSLDAAAEEPSGHGADEDPVLSVENAGRDSDALRLESTVVEESNGSDEVEKSDETKMSEEILALVDEFQQAWPLEGFGGTLEMKGRRLDLQGIRVLKKGPQDGVAKSSCYGDCRSEDDEATEWITFQVKRVKKPKGDHKKPPGKKVEASQAENGQRYQANLEITGPKVASPGPQEKKRDYQSLGWPSPDECLKLRWVELTAIVSTWLAVSSKNIDITEHIDFATPIQQPAMEPLCNGNLPTSMHTLDHLHGVSNRASLHYTGESQLTEVLQNLGKDQYPQQSLEQIGTRIAKVLEKNQTSWVLSSMAALYWRVKGQGKKAIDCLRQALHYAPHQMKDVPLISLANILHNAKLWNDAVIVATMAVEIAPHFAVNHFTLGNVYVAMEEFEKALVWYESTLKLQPEFVPAKNRIQTIQCHLMLKKGRRSP.

A TPR 1 repeat occupies 295-328 (FTSYYTLGNIYAMLGEYNHSVLCYDHALQAKPGF). Residues 340–382 (CQQKLEQKLEAQHRSLQRTLNELKEYQKQHDHYLRQQEILEKH) adopt a coiled-coil conformation. TPR repeat units follow at residues 619–652 (WLILNEAGLYWRAVGNSTFAIACLQRALNLAPVQ) and 689–722 (PLTFLSLGNAYLALKNVSGALEAFRQALKLSTKC). 2 disordered regions span residues 774–793 (LDAAAEEPSGHGADEDPVLS) and 902–954 (VKKP…YQSL). Basic residues predominate over residues 902–914 (VKKPKGDHKKPPG). TPR repeat units follow at residues 1071 to 1105 (SWVLSSMAALYWRVKGQGKKAIDCLRQALHYAPHQ), 1108 to 1141 (DVPLISLANILHNAKLWNDAVIVATMAVEIAPHF), and 1142 to 1175 (AVNHFTLGNVYVAMEEFEKALVWYESTLKLQPEF).

The protein belongs to the TTC17 family. In terms of assembly, interacts with CATIP.

It is found in the cytoplasm. The protein localises to the cell membrane. It localises to the cytoskeleton. Its function is as follows. Plays a role in primary ciliogenesis by modulating actin polymerization. In Mus musculus (Mouse), this protein is Tetratricopeptide repeat protein 17 (Ttc17).